We begin with the raw amino-acid sequence, 310 residues long: Ribosomal RNA small subunit methyltransferase H (310 aa).

Residues 33–35 (AGH), aspartate 53, phenylalanine 79, aspartate 100, and glutamine 107 contribute to the S-adenosyl-L-methionine site.

Belongs to the methyltransferase superfamily. RsmH family.

The protein resides in the cytoplasm. It catalyses the reaction cytidine(1402) in 16S rRNA + S-adenosyl-L-methionine = N(4)-methylcytidine(1402) in 16S rRNA + S-adenosyl-L-homocysteine + H(+). Its function is as follows. Specifically methylates the N4 position of cytidine in position 1402 (C1402) of 16S rRNA. The chain is Ribosomal RNA small subunit methyltransferase H from Clostridium botulinum (strain Alaska E43 / Type E3).